The chain runs to 113 residues: MTDMTIPLTFTDAAAKKVKNLIIEEENQDLKLRVYITGGGCSGFQYGFTFDEKVNDGDLTIENDGVKLVIDPMSLQYLIGGTVDYTEGLEGSRFVVHNPNATTTCGCGSSFSI.

Iron-sulfur cluster is bound by residues Cys41, Cys105, and Cys107.

It belongs to the HesB/IscA family. Homodimer. It depends on iron-sulfur cluster as a cofactor.

In terms of biological role, required for insertion of 4Fe-4S clusters for at least IspG. This Mannheimia succiniciproducens (strain KCTC 0769BP / MBEL55E) protein is Iron-sulfur cluster insertion protein ErpA.